Reading from the N-terminus, the 293-residue chain is Non-structural protein NS-S (293 aa).

Residues 21-29 (VRLEPSLGE) form an essential for inhibition of IFN-beta activation and interaction with host TBK1 region. An involved in inclusion bodies formation region spans residues 66-69 (PKNP). The interval 148 to 220 (FEGDMILDSL…KPLLDCWDFF (73 aa)) is interaction with host TNIP2.

The protein belongs to the Bandavirus NS-S protein family. In terms of assembly, interacts with the host E3 ubiquitin ligase TRIM25; this interaction sequesters TRIM25 in NSs-induced cytoplasmic inclusion bodies. Interacts with the host E3 ubiquitin ligase RIGI; this interaction sequesters RIGI in NSs-induced cytoplasmic inclusion bodies. Interacts with the host E3 ubiquitin ligase TBK1 (via N-terminus); this interaction sequesters TBK1 in NSs-induced cytoplasmic inclusion bodies and inhibits TBK1 phosphorylation. NSs does not interact with IKBKE/IKKE or IRF3. Interacts with host IRF7; this interaction sequesters IRF7 in NSs-induced cytoplasmic inclusion bodies. Interacts with host SYNGR2; this interaction is essential to promoting the formation of the inclusion bodies to become virus factories for viral RNA replication through its interaction with NSs. Interacts with host STAT2; this interaction sequesters STAT2 in NSs-induced cytoplasmic inclusion bodies. Interacts with host TNIP2; this interaction promotes TPL2 complex formation and signaling activity leading to IL-10 production. Interacts with host TRIM21 (via B30.2/SPRY domain); this interaction activates host NFE2L2-mediated transcriptional activation of antioxidant genes. Interacts with host CDK1; this interaction is inclusion body dependent, it inhibits the formation and nuclear import of the cyclin B1-CDK1 complex and leads to host cell cycle arrest.

Its subcellular location is the host cytoplasm. The protein localises to the host cytoplasmic vesicle. Its function is as follows. Sequesters host STAT2 into viral inclusion bodies. Impairs IFN-stimulated phosphorylation and nuclear translocation of host STAT2, thereby suppressing type-I IFN antiviral signaling. Sequesters host TRIM25, RIGI, TBK1/IKK complex components (TBK1, IKBKE/IKKE, and IRF3) and IRF7 into viral inclusion bodies, thereby inhibiting the IFN responses. Inhibits TRIM25-mediated ubiquitination of the RIGI. The sequestration of IKBKE/IKKE, and IRF3 occurs via the interaction with TBK1. Sequestration and inhibition of host TBK1 probably participates to the cytokine storm induced by the virus. Also inhibits the phosphorylation of host TBK1. Interacts with host TNIP2 and promotes TPL2-TNIP2-p105 complex formation leading to IL-10 induction. By interacting with CDK1, induces host cell arrest at the G2/M transition to promote viral replication. Requested for the formation of the viral cytoplasmic inclusion bodies. This chain is Non-structural protein NS-S (NSS), found in SFTS phlebovirus (isolate SFTSV/Human/China/HB29/2010) (Severe fever with thrombocytopenia virus).